The sequence spans 267 residues: Acyl-[acyl-carrier-protein]--UDP-N-acetylglucosamine O-acyltransferase (267 aa).

This sequence belongs to the transferase hexapeptide repeat family. LpxA subfamily. In terms of assembly, homotrimer.

The protein resides in the cytoplasm. It carries out the reaction a (3R)-hydroxyacyl-[ACP] + UDP-N-acetyl-alpha-D-glucosamine = a UDP-3-O-[(3R)-3-hydroxyacyl]-N-acetyl-alpha-D-glucosamine + holo-[ACP]. The protein operates within glycolipid biosynthesis; lipid IV(A) biosynthesis; lipid IV(A) from (3R)-3-hydroxytetradecanoyl-[acyl-carrier-protein] and UDP-N-acetyl-alpha-D-glucosamine: step 1/6. Involved in the biosynthesis of lipid A, a phosphorylated glycolipid that anchors the lipopolysaccharide to the outer membrane of the cell. The sequence is that of Acyl-[acyl-carrier-protein]--UDP-N-acetylglucosamine O-acyltransferase from Cupriavidus taiwanensis (strain DSM 17343 / BCRC 17206 / CCUG 44338 / CIP 107171 / LMG 19424 / R1) (Ralstonia taiwanensis (strain LMG 19424)).